The sequence spans 313 residues: ADP-L-glycero-D-manno-heptose-6-epimerase (313 aa).

NADP(+)-binding positions include 10–11, 31–32, Arg-38, Lys-53, 75–79, and Asn-92; these read FI, DD, and EGACS. Tyr-139 acts as the Proton acceptor in catalysis. Lys-143 serves as a coordination point for NADP(+). Asn-168 serves as a coordination point for substrate. NADP(+) contacts are provided by Val-169 and Lys-177. Lys-177 acts as the Proton acceptor in catalysis. Substrate contacts are provided by residues Lys-179, His-186, 200 to 203, Arg-213, and Tyr-277; that span reads FEGW.

Belongs to the NAD(P)-dependent epimerase/dehydratase family. HldD subfamily. Homopentamer. NADP(+) serves as cofactor.

It catalyses the reaction ADP-D-glycero-beta-D-manno-heptose = ADP-L-glycero-beta-D-manno-heptose. It functions in the pathway nucleotide-sugar biosynthesis; ADP-L-glycero-beta-D-manno-heptose biosynthesis; ADP-L-glycero-beta-D-manno-heptose from D-glycero-beta-D-manno-heptose 7-phosphate: step 4/4. Its function is as follows. Catalyzes the interconversion between ADP-D-glycero-beta-D-manno-heptose and ADP-L-glycero-beta-D-manno-heptose via an epimerization at carbon 6 of the heptose. This is ADP-L-glycero-D-manno-heptose-6-epimerase from Marinobacter nauticus (strain ATCC 700491 / DSM 11845 / VT8) (Marinobacter aquaeolei).